The primary structure comprises 414 residues: Inositol-tetrakisphosphate 1-kinase (414 aa).

Residue lysine 18 coordinates 1D-myo-inositol 1,3,4-trisphosphate. ATP is bound by residues arginine 106 and lysine 157. An ATP-grasp domain is found at glutamate 117–threonine 325. Positions 167 and 199 each coordinate 1D-myo-inositol 1,3,4-trisphosphate. Residues glutamine 188–lysine 199, serine 214, serine 232, and serine 236 each bind ATP. Aspartate 281, aspartate 295, and asparagine 297 together coordinate Mg(2+). A 1D-myo-inositol 1,3,4-trisphosphate-binding site is contributed by asparagine 297. N6-acetyllysine; by EP300 and CREBBP is present on residues lysine 340 and lysine 383. Serine 396 is subject to Phosphoserine. Lysine 410 carries the N6-acetyllysine; by EP300 and CREBBP modification.

This sequence belongs to the ITPK1 family. Monomer. Interacts with GPS1/COPS1. The cofactor is Mg(2+). In terms of processing, acetylation by EP300 and CREBBP destabilizes ITPK1, and down-regulates enzymatic activity. Deacetylated by SIRT1. Expressed in brain &gt; heart &gt; skeletal muscle = kidney = pancreas = liver = placenta &gt; lung. In brain, it is expressed in cerebellum, cerebral cortex, medulla, spinal cord, occipital lobe, frontal lobe, temporal lobe and putamen.

It catalyses the reaction 1D-myo-inositol 3,4,5,6-tetrakisphosphate + ATP = 1D-myo-inositol 1,3,4,5,6-pentakisphosphate + ADP + H(+). It carries out the reaction 1D-myo-inositol 1,3,4-trisphosphate + ATP = 1D-myo-inositol 1,3,4,5-tetrakisphosphate + ADP + H(+). The enzyme catalyses 1D-myo-inositol 1,3,4-trisphosphate + ATP = 1D-myo-inositol 1,3,4,6-tetrakisphosphate + ADP + H(+). The catalysed reaction is 1D-myo-inositol 3,4,6-trisphosphate + ATP = 1D-myo-inositol 1,3,4,6-tetrakisphosphate + ADP + H(+). It catalyses the reaction 1D-myo-inositol 1,3,4-trisphosphate + 1D-myo-inositol 1,3,4,5,6-pentakisphosphate = 1D-myo-inositol 3,4,5,6-tetrakisphosphate + 1D-myo-inositol 1,3,4,6-tetrakisphosphate. It carries out the reaction 1D-myo-inositol 1,3,4-trisphosphate + 1D-myo-inositol 1,3,4,5,6-pentakisphosphate = 1D-myo-inositol 3,4,5,6-tetrakisphosphate + 1D-myo-inositol 1,3,4,5-tetrakisphosphate. Its function is as follows. Kinase that can phosphorylate various inositol polyphosphate such as Ins(3,4,5,6)P4 or Ins(1,3,4)P3. Phosphorylates Ins(3,4,5,6)P4 at position 1 to form Ins(1,3,4,5,6)P5. This reaction is thought to have regulatory importance, since Ins(3,4,5,6)P4 is an inhibitor of plasma membrane Ca(2+)-activated Cl(-) channels, while Ins(1,3,4,5,6)P5 is not. Also phosphorylates Ins(1,3,4)P3 on O-5 and O-6 to form Ins(1,3,4,6)P4, an essential molecule in the hexakisphosphate (InsP6) pathway. Also acts as an inositol polyphosphate phosphatase that dephosphorylates Ins(1,3,4,5)P4 and Ins(1,3,4,6)P4 to Ins(1,3,4)P3, and Ins(1,3,4,5,6)P5 to Ins(3,4,5,6)P4. May also act as an isomerase that interconverts the inositol tetrakisphosphate isomers Ins(1,3,4,5)P4 and Ins(1,3,4,6)P4 in the presence of ADP and magnesium. Probably acts as the rate-limiting enzyme of the InsP6 pathway. Modifies TNF-alpha-induced apoptosis by interfering with the activation of TNFRSF1A-associated death domain. Plays an important role in MLKL-mediated necroptosis. Produces highly phosphorylated inositol phosphates such as inositolhexakisphosphate (InsP6) which bind to MLKL mediating the release of an N-terminal auto-inhibitory region leading to its activation. Essential for activated phospho-MLKL to oligomerize and localize to the cell membrane during necroptosis. In Homo sapiens (Human), this protein is Inositol-tetrakisphosphate 1-kinase.